Here is a 536-residue protein sequence, read N- to C-terminus: Chaperonin GroEL (536 aa).

ATP contacts are provided by residues 29-32 (TLGP), 86-90 (DGTTT), Gly-412, and Asp-493.

This sequence belongs to the chaperonin (HSP60) family. In terms of assembly, forms a cylinder of 14 subunits composed of two heptameric rings stacked back-to-back. Interacts with the co-chaperonin GroES.

It is found in the cytoplasm. The enzyme catalyses ATP + H2O + a folded polypeptide = ADP + phosphate + an unfolded polypeptide.. Functionally, together with its co-chaperonin GroES, plays an essential role in assisting protein folding. The GroEL-GroES system forms a nano-cage that allows encapsulation of the non-native substrate proteins and provides a physical environment optimized to promote and accelerate protein folding. This Aster yellows witches'-broom phytoplasma (strain AYWB) protein is Chaperonin GroEL.